Reading from the N-terminus, the 66-residue chain is Large ribosomal subunit protein uL29 (66 aa).

Belongs to the universal ribosomal protein uL29 family.

In Borreliella afzelii (strain PKo) (Borrelia afzelii), this protein is Large ribosomal subunit protein uL29.